A 514-amino-acid chain; its full sequence is Anthranilate synthase component 1 (514 aa).

Residues Thr-40 and 290–292 (PYM) contribute to the L-tryptophan site. Residue 327 to 328 (GT) participates in chorismate binding. Glu-360 is a binding site for Mg(2+). Residues Tyr-448, Arg-468, 482 to 484 (GAG), and Gly-484 each bind chorismate. Glu-497 is a binding site for Mg(2+).

It belongs to the anthranilate synthase component I family. As to quaternary structure, heterotetramer consisting of two non-identical subunits: a beta subunit (TrpG) and a large alpha subunit (TrpE). Requires Mg(2+) as cofactor.

The catalysed reaction is chorismate + L-glutamine = anthranilate + pyruvate + L-glutamate + H(+). It functions in the pathway amino-acid biosynthesis; L-tryptophan biosynthesis; L-tryptophan from chorismate: step 1/5. Feedback inhibited by tryptophan. Part of a heterotetrameric complex that catalyzes the two-step biosynthesis of anthranilate, an intermediate in the biosynthesis of L-tryptophan. In the first step, the glutamine-binding beta subunit (TrpG) of anthranilate synthase (AS) provides the glutamine amidotransferase activity which generates ammonia as a substrate that, along with chorismate, is used in the second step, catalyzed by the large alpha subunit of AS (TrpE) to produce anthranilate. In the absence of TrpG, TrpE can synthesize anthranilate directly from chorismate and high concentrations of ammonia. The chain is Anthranilate synthase component 1 (trpE) from Buchnera aphidicola subsp. Rhopalosiphum padi.